The sequence spans 829 residues: Cadherin-3 (829 aa).

The signal sequence occupies residues 1 to 24; it reads MGLPRGPLASLLLLQVCWLQCAAS. Positions 25–107 are excised as a propeptide; it reads EPCRAVFREA…SKRILRRHKR (83 aa). 5 Cadherin domains span residues 108 to 215, 216 to 328, 329 to 440, 441 to 546, and 547 to 650; these read DWVV…KPKF, TQDT…APMF, DPQK…APVF, VPPS…DHGP, and VPEP…CPGP. At 108 to 654 the chain is on the extracellular side; sequence DWVVAPISVP…ETCPGPWKGG (547 aa). The N-linked (GlcNAc...) asparagine glycan is linked to Asn200. A glycan (N-linked (GlcNAc...) asparagine) is linked at Asn566. A helical transmembrane segment spans residues 655–677; the sequence is FILPVLGAVLALLFLLLVLLLLV. The Cytoplasmic portion of the chain corresponds to 678–829; that stretch reads RKKRKIKEPL…ADMYGGGEDD (152 aa).

Interacts with CDCP1 and CTNNB1. In terms of tissue distribution, expressed in some normal epithelial tissues and in some carcinoma cell lines.

It is found in the cell membrane. In terms of biological role, cadherins are calcium-dependent cell adhesion proteins. They preferentially interact with themselves in a homophilic manner in connecting cells; cadherins may thus contribute to the sorting of heterogeneous cell types. In Homo sapiens (Human), this protein is Cadherin-3 (CDH3).